The sequence spans 195 residues: ATP-dependent Clp protease proteolytic subunit 2 (195 aa).

Catalysis depends on S98, which acts as the Nucleophile. H123 is a catalytic residue.

It belongs to the peptidase S14 family. In terms of assembly, fourteen ClpP subunits assemble into 2 heptameric rings which stack back to back to give a disk-like structure with a central cavity, resembling the structure of eukaryotic proteasomes.

Its subcellular location is the cytoplasm. It carries out the reaction Hydrolysis of proteins to small peptides in the presence of ATP and magnesium. alpha-casein is the usual test substrate. In the absence of ATP, only oligopeptides shorter than five residues are hydrolyzed (such as succinyl-Leu-Tyr-|-NHMec, and Leu-Tyr-Leu-|-Tyr-Trp, in which cleavage of the -Tyr-|-Leu- and -Tyr-|-Trp bonds also occurs).. In terms of biological role, cleaves peptides in various proteins in a process that requires ATP hydrolysis. Has a chymotrypsin-like activity. Plays a major role in the degradation of misfolded proteins. ClpXP2 is involved in the complete degradation of the Site-2 clipped anti-sigma-W factor RsiW. This results in the release of SigW and the transcription activation of the genes under the control of the sigma-W factor. The chain is ATP-dependent Clp protease proteolytic subunit 2 from Shouchella clausii (strain KSM-K16) (Alkalihalobacillus clausii).